The primary structure comprises 393 residues: Neuroplastin (393 aa).

A signal peptide spans Met-1–Ala-28. Ig-like domains lie at Gln-29–Thr-134, Pro-148–Lys-234, and Pro-237–Ser-327. The Extracellular portion of the chain corresponds to Gln-29–Pro-338. Cys-52 and Cys-116 are oxidised to a cystine. The narpin; mediates binding with FGFR1 and has antidepressant-like activity stretch occupies residues Arg-149–Ser-161. A disulfide bridge connects residues Cys-169 and Cys-217. 6 N-linked (GlcNAc...) asparagine glycosylation sites follow: Asn-170, Asn-196, Asn-228, Asn-283, Asn-295, and Asn-316. Cys-258 and Cys-315 are disulfide-bonded. The helical transmembrane segment at Leu-339 to Tyr-359 threads the bilayer. Residues Glu-360–Asn-393 are Cytoplasmic-facing. The segment at Asp-366 to Asn-393 is disordered.

Interacts with ATP2B1; this interaction stabilizes ATP2B1 and increases ATPase activity; this interaction controls T cell calcium homeostasis following T cell activation. Interacts with XKR8; promoting its localization at the cell membrane. In terms of processing, isoform 1 and isoform 2 are N-glycosylated. Isoform 1 is ubiquitously expressed. Isoform 2 is brain-specific. In brain isoform 2 is highly expressed in hippocampus and cerebral cortex and weakly in cerebellum and lower brain regions. In the hippocampus isoform 2 is found in the dentate gyrus and CA1-CA4, the striatum oriens of CA3 shows the higher level.

Its subcellular location is the cell membrane. The protein localises to the postsynaptic density. Its function is as follows. Probable homophilic and heterophilic cell adhesion molecule involved in long term potentiation at hippocampal excitatory synapses through activation of p38MAPK. May also regulate neurite outgrowth by activating the FGFR1 signaling pathway. May play a role in synaptic plasticity. Also acts as a chaperone for ATP2B1; stabilizes ATP2B1 and increases its ATPase activity. Promotes localization of XKR8 at the cell membrane. In Rattus norvegicus (Rat), this protein is Neuroplastin (Nptn).